The following is a 347-amino-acid chain: Histone deacetylase 11 (347 aa).

A histone deacetylase region spans residues 14–318 (KRWPIVYSPR…ARIIADSILN (305 aa)). His143 is a catalytic residue.

It belongs to the histone deacetylase family. Interacts with HDAC6.

The protein resides in the nucleus. It catalyses the reaction N(6)-acetyl-L-lysyl-[histone] + H2O = L-lysyl-[histone] + acetate. Responsible for the deacetylation of lysine residues on the N-terminal part of the core histones (H2A, H2B, H3 and H4). Histone deacetylation gives a tag for epigenetic repression and plays an important role in transcriptional regulation, cell cycle progression and developmental events. Histone deacetylases act via the formation of large multiprotein complexes. The chain is Histone deacetylase 11 (Hdac11) from Mus musculus (Mouse).